Consider the following 160-residue polypeptide: Cyclic pyranopterin monophosphate synthase (160 aa).

Residues methionine 77–histidine 79 and methionine 114–glutamate 115 each bind substrate. Aspartate 129 is an active-site residue.

This sequence belongs to the MoaC family. As to quaternary structure, homohexamer; trimer of dimers.

It catalyses the reaction (8S)-3',8-cyclo-7,8-dihydroguanosine 5'-triphosphate = cyclic pyranopterin phosphate + diphosphate. It functions in the pathway cofactor biosynthesis; molybdopterin biosynthesis. Functionally, catalyzes the conversion of (8S)-3',8-cyclo-7,8-dihydroguanosine 5'-triphosphate to cyclic pyranopterin monophosphate (cPMP). In Listeria welshimeri serovar 6b (strain ATCC 35897 / DSM 20650 / CCUG 15529 / CIP 8149 / NCTC 11857 / SLCC 5334 / V8), this protein is Cyclic pyranopterin monophosphate synthase.